The following is a 1123-amino-acid chain: MTPVVHCSVGNISLFHIGSFRPSHEIQIRRFRSTERYSRVPSRRLLQPQRAFNLISIYKRSSWSSARRPRTLSAATVGTDVTVEDPNPPPSGETSEESSEDTAPDTAEASEQAEASTSSIPKAGRNIRKSEMPPLNDEDLVPGASFTGKVRSIKPFGVFVDIGAFTEGLVHISRVSDGFVKDISSLFTVGQEVSVRLVEANKETGRISLTMRTGGDYVKPKTETPKAASGGRNTTATTSRGSPRQTRERDEAKSMGETNYVQGQFLDGVVKNSTRAGSFVTLPDGSEGFLPREEEAVALFTLIGHSALEVGQQVRVKVLNVVRGQVTLTMKEGEDDEEDLASLNTQLKQGWSRGTNAFELAFRRNKEISAFLDQREKIIVPDVQEAAVASVGTELDAEVGIEQSPGKEPETGNAESVAIDSSITEVKETDSIAAVEKDSEISKTESVETASSVVISEDDSTVDGKLVEPTASVSATETEIKEDSSEGSVTTEPTEAASTEFVTAVVEESAPTASSVETSEDDSTVDDKLVEPTASVSATEAESKEDSSEGSVASTESVTAVVEESAPVSSVAIEVPAPEASEASAQEIIEDSTTVEGAADDQTVESDSPPPEGVELSSNGAPDSSIAEDKPDEPEESLIVEEVPVTASSESEDKEPAAVPEEVAASSEKTADVAVAGAEASTATATISPALVKQLREATGAGMMDCKKALAESGGDIEKAQEFLRKKGLAAADKRAGRATAEGRIGSYIHDSRIGVLIEVNCETDFVSRGDIFKELVDDLAMQVAACPQVQYISLDDVPEEVMKKETELEMQREDLLSKPEQIRSKIVEGRVKKRLGEYALLEQPFIKNDKVTISEWVKQTIATIGENMKVNRFVRYNLGEGLEKRSQDFAAEVAAQTAAKAPPAAPPKDDKPEETAETEEKKPAVAISAALVKQLRDETGAGMMDCKKALAETGGDIQQAQEFLRKKGLSSADKKSSRLTAEGLIGAYIHDNRIGCMIEINSETDFVARNEKFKELVNDLAMQVVACPQVEYVSIEDIPESVVIKEKEIEMQREDLQSKPENIREKIVEGRISKRLGVLALLEQPFIKDDSKTVKDLVKETIATLGENIKVRRFTRYTLGEN.

A chloroplast-targeting transit peptide spans 1–73 (MTPVVHCSVG…SSARRPRTLS (73 aa)). A disordered region spans residues 68-141 (RPRTLSAATV…MPPLNDEDLV (74 aa)). The segment covering 94–103 (TSEESSEDTA) has biased composition (acidic residues). Low complexity predominate over residues 106–119 (TAEASEQAEASTSS). The S1 motif 1 domain maps to 143 to 212 (GASFTGKVRS…ETGRISLTMR (70 aa)). The tract at residues 213-258 (TGGDYVKPKTETPKAASGGRNTTATTSRGSPRQTRERDEAKSMGET) is disordered. Polar residues predominate over residues 231-244 (GRNTTATTSRGSPR). Positions 245 to 254 (QTRERDEAKS) are enriched in basic and acidic residues. The region spanning 263–331 (GQFLDGVVKN…VRGQVTLTMK (69 aa)) is the S1 motif 2 domain. 2 disordered regions span residues 443-670 (KTES…SEKT) and 894-923 (VAAQTAAKAPPAAPPKDDKPEETAETEEKK). Residues 486–501 (EGSVTTEPTEAASTEF) show a composition bias toward polar residues. A compositionally biased stretch (low complexity) spans 551–587 (SVASTESVTAVVEESAPVSSVAIEVPAPEASEASAQE). Residues 630-639 (KPDEPEESLI) are compositionally biased toward acidic residues. Low complexity-rich tracts occupy residues 657–670 (AAVPEEVAASSEKT) and 894–903 (VAAQTAAKAP). Basic and acidic residues predominate over residues 908 to 923 (PKDDKPEETAETEEKK).

Belongs to the EF-Ts family. Component of the chloroplast ribosome 30S and 70S subunits, as well as polysomes. In terms of assembly, component of the chloroplast ribosome 70S subunit, and at low levels, present in polysomes. As to quaternary structure, associates transiently with chloroplast polysomes.

It localises to the plastid. It is found in the chloroplast. Its function is as follows. Associates with the EF-Tu.GDP complex and induces the exchange of GDP to GTP. It remains bound to the aminoacyl-tRNA.EF-Tu.GTP complex up to the GTP hydrolysis stage on the ribosome. In terms of biological role, binds to psbD and psbA 5'-untranslated regions (UTRs) in vitro. The sequence is that of Polyprotein of EF-Ts, chloroplastic from Oryza sativa subsp. indica (Rice).